The primary structure comprises 823 residues: Adhesion G protein-coupled receptor E2 (823 aa).

The first 23 residues, 1-23 (MGGRVFLVFLAFCVWLTLPGAET), serve as a signal peptide directing secretion. Residues 24–540 (QDSRGCARWC…EEDPVLTVIT (517 aa)) lie on the Extracellular side of the membrane. Residues 25-66 (DSRGCARWCPQDSSCVNATACRCNPGFSSFSEIITTPMETCD) form the EGF-like 1 domain. Cystine bridges form between cysteine 29/cysteine 39, cysteine 33/cysteine 45, cysteine 47/cysteine 65, cysteine 71/cysteine 85, cysteine 79/cysteine 94, cysteine 96/cysteine 117, cysteine 123/cysteine 136, cysteine 130/cysteine 145, cysteine 147/cysteine 161, cysteine 167/cysteine 180, cysteine 174/cysteine 189, cysteine 191/cysteine 210, cysteine 216/cysteine 229, cysteine 223/cysteine 238, and cysteine 240/cysteine 259. The N-linked (GlcNAc...) asparagine glycan is linked to asparagine 41. The 52-residue stretch at 67–118 (DINECATLSKVSCGKFSDCWNTEGSYDCVCSPGYEPVSGAKTFKNESENTCQ) folds into the EGF-like 2; calcium-binding domain. Asparagine 111 carries N-linked (GlcNAc...) asparagine glycosylation. One can recognise an EGF-like 3; calcium-binding domain in the interval 119-162 (DVDECQQNPRLCKSYGTCVNTLGSYTCQCLPGFKLKPEDPKLCT). In terms of domain architecture, EGF-like 4; calcium-binding spans 163–211 (DVNECTSGQNPCHSSTHCLNNVGSYQCRCRPGWQPIPGSPNGPNNTVCE). Asparagine 206 is a glycosylation site (N-linked (GlcNAc...) asparagine). The region spanning 212–260 (DVDECSSGQHQCDSSTVCFNTVGSYSCRCRPGWKPRHGIPNNQKDTVCE) is the EGF-like 5; calcium-binding domain. N-linked (GlcNAc...) asparagine glycosylation is found at asparagine 298, asparagine 347, asparagine 354, asparagine 456, and asparagine 460. Positions 354-530 (NFSYPAGTEL…AVLMAHYDVQ (177 aa)) constitute a GAIN-B domain. Cystine bridges form between cysteine 482-cysteine 512 and cysteine 500-cysteine 514. The GPS stretch occupies residues 482-530 (CVFWEHGQNGCGHWATTGCSTIGTRDTSTICRCTHLSSFAVLMAHYDVQ). The helical transmembrane segment at 541–561 (YMGLSVSLLCLLLAALTFLLC) threads the bilayer. Topologically, residues 562 to 569 (KAIQNTST) are cytoplasmic. Residues 570-590 (SLHLQLSLCLFLAHLLFLVAI) form a helical membrane-spanning segment. Residues 591-605 (DQTGHKVLCSIIAGT) lie on the Extracellular side of the membrane. Residues 606–626 (LHYLYLATLTWMLLEALYLFL) traverse the membrane as a helical segment. The Cytoplasmic portion of the chain corresponds to 627-644 (TARNLTVVNYSSINRFMK). Residues 645-665 (KLMFPVGYGVPAVTVAISAAS) form a helical membrane-spanning segment. The Extracellular portion of the chain corresponds to 666 to 683 (RPHLYGTPSRCWLQPEKG). The helical transmembrane segment at 684–704 (FIWGFLGPVCAIFSVNLVLFL) threads the bilayer. The Cytoplasmic segment spans residues 705-735 (VTLWILKNRLSSLNSEVSTLRNTRMLAFKAT). A helical transmembrane segment spans residues 736–756 (AQLFILGCTWCLGILQVGPAA). Residues 757–760 (RVMA) lie on the Extracellular side of the membrane. The chain crosses the membrane as a helical span at residues 761 to 781 (YLFTIINSLQGVFIFLVYCLL). At 782–823 (SQQVREQYGKWSKGIRKLKTESEMHTLSSSAKADTSKPSTVN) the chain is on the cytoplasmic side.

The protein belongs to the G-protein coupled receptor 2 family. Adhesion G-protein coupled receptor (ADGR) subfamily. As to quaternary structure, forms a heterodimer, consisting of a large extracellular region non-covalently linked to a seven-transmembrane moiety. Interacts with chondroitin sulfate; the interaction with chondroitin sulfate is calcium-dependent. Interacts with CD55. Autoproteolytically cleaved into 2 subunits, an extracellular alpha subunit and a seven-transmembrane beta subunit. Expression is restricted to myeloid cells. Highest expression was found in peripheral blood leukocytes, followed by spleen and lymph nodes, with intermediate to low levels in thymus, bone marrow, fetal liver, placenta, and lung, and no expression in heart, brain, skeletal muscle, kidney, or pancreas. Expression is also detected in monocyte/macrophage and Jurkat cell lines but not in other cell lines tested. High expression in mast cells.

It is found in the cell membrane. It localises to the cell projection. Its subcellular location is the ruffle membrane. Its function is as follows. Cell surface receptor that binds to the chondroitin sulfate moiety of glycosaminoglycan chains and promotes cell attachment. Promotes granulocyte chemotaxis, degranulation and adhesion. In macrophages, promotes the release of inflammatory cytokines, including IL8 and TNF. Signals probably through G-proteins. Is a regulator of mast cell degranulation. The polypeptide is Adhesion G protein-coupled receptor E2 (Homo sapiens (Human)).